The following is a 449-amino-acid chain: Xylose isomerase (449 aa).

Residues His-103 and Asp-106 contribute to the active site. Mg(2+)-binding residues include Glu-234, Glu-270, His-273, Asp-298, Asp-309, Asp-311, and Asp-342.

It belongs to the xylose isomerase family. As to quaternary structure, homotetramer. Mg(2+) serves as cofactor.

It localises to the cytoplasm. The catalysed reaction is alpha-D-xylose = alpha-D-xylulofuranose. In Levilactobacillus brevis (Lactobacillus brevis), this protein is Xylose isomerase.